Consider the following 150-residue polypeptide: Natriuretic peptides A (150 aa).

Residues 1-24 form the signal peptide; the sequence is MSSFTITVSFLLVLVFQFPGQTRA. 2 propeptides span residues 25–122 and 92–102; these read NPVY…AAPR and DGGALGRGPWD. The tract at residues 77-100 is disordered; the sequence is LEVPPWTGEVNPAQRDGGALGRGP. Ser-128 carries the phosphoserine modification. A disulfide bond links Cys-129 and Cys-145.

It belongs to the natriuretic peptide family. Homodimer; disulfide-linked antiparallel dimer. Post-translationally, the precursor molecule is proteolytically cleaved by CORIN at Arg-122 to produce the atrial natriuretic peptide. Undergoes further proteolytic cleavage by unknown proteases to give rise to long-acting natriuretic peptide, vessel dilator and kaliuretic peptide. Additional processing gives rise to the auriculin and atriopeptin peptides. In the kidneys, alternative processing by an unknown protease results in the peptide urodilatin. Cleavage by MME initiates degradation of the factor and thereby regulates its activity. Degradation by IDE results in reduced activation of NPR1 (in vitro). During IDE degradation, the resulting products can temporarily stimulate NPR2 to produce cGMP, before the fragments are completely degraded and inactivated by IDE (in vitro). In terms of processing, degraded by IDE. Post-translationally, phosphorylation on Ser-128 decreases vasorelaxant activity. As to expression, brain (at protein level).

The protein localises to the secreted. The protein resides in the perikaryon. Its subcellular location is the cell projection. In terms of biological role, hormone that plays a key role in mediating cardio-renal homeostasis, and is involved in vascular remodeling and regulating energy metabolism. Acts by specifically binding and stimulating NPR1 to produce cGMP, which in turn activates effector proteins, such as PRKG1, that drive various biological responses. Regulates vasodilation, natriuresis, diuresis and aldosterone synthesis and is therefore essential for regulating blood pressure, controlling the extracellular fluid volume and maintaining the fluid-electrolyte balance. Also involved in inhibiting cardiac remodeling and cardiac hypertrophy by inducing cardiomyocyte apoptosis and attenuating the growth of cardiomyocytes and fibroblasts. Plays a role in female pregnancy by promoting trophoblast invasion and spiral artery remodeling in uterus, and thus prevents pregnancy-induced hypertension. In adipose tissue, acts in various cGMP- and PKG-dependent pathways to regulate lipid metabolism and energy homeostasis. This includes up-regulating lipid metabolism and mitochondrial oxygen utilization by activating the AMP-activated protein kinase (AMPK), and increasing energy expenditure by acting via MAPK11 to promote the UCP1-dependent thermogenesis of brown adipose tissue. Binds the clearance receptor NPR3 which removes the hormone from circulation. Its function is as follows. May have a role in cardio-renal homeostasis through regulation of natriuresis, diuresis, vasodilation, and inhibiting aldosterone synthesis. In vitro, promotes the production of cGMP and induces vasodilation. May promote natriuresis, at least in part, by enhancing prostaglandin E2 synthesis resulting in the inhibition of renal Na+-K+-ATPase. However reports on the involvement of this peptide in mammal blood volume and blood pressure homeostasis are conflicting; according to a report, in vivo it is not sufficient to activate cGMP and does not inhibit collecting duct transport nor effect diuresis and natriuresis. Appears to bind to specific receptors that are distinct from the receptors bound by atrial natriuretic peptide and vessel dilator. Possibly enhances protein excretion in urine by decreasing proximal tubular protein reabsorption. Functionally, may have a role in cardio-renal homeostasis through regulation of natriuresis, diuresis, and vasodilation. In vitro, promotes the production of cGMP and induces vasodilation. May promote natriuresis, at least in part, by enhancing prostaglandin E2 synthesis resulting in the inhibition of renal Na+-K+-ATPase. However reports on the involvement of this peptide in mammal blood volume and blood pressure homeostasis are conflicting; according to a report it is not sufficient to activate cGMP and does not inhibit collecting duct transport nor effect diuresis and natriuresis. Appears to bind to specific receptors that are distinct from the receptors bound by the atrial natriuretic and long-acting natriuretic peptides. Possibly functions in protein excretion in urine by maintaining the integrity of the proximal tubules and enhancing protein excretion by decreasing proximal tubular protein reabsorption. May have a role in cardio-renal homeostasis through regulation of diuresis and inhibiting aldosterone synthesis. In vitro, promotes the production of cGMP and induces vasodilation. May promote natriuresis, at least in part, by enhancing prostaglandin E2 synthesis resulting in the inhibition of renal Na+-K+-ATPase. May have a role in potassium excretion but not sodium excretion (natriuresis). Possibly enhances protein excretion in urine by decreasing proximal tubular protein reabsorption. In terms of biological role, hormone produced in the kidneys that appears to be important for maintaining cardio-renal homeostasis. Mediates vasodilation, natriuresis and diuresis primarily in the renal system, in order to maintain the extracellular fluid volume and control the fluid-electrolyte balance. Specifically binds and stimulates cGMP production by renal transmembrane receptors, likely NPR1. Urodilatin not ANP, may be the natriuretic peptide responsible for the regulation of sodium and water homeostasis in the kidney. Its function is as follows. May have a role in cardio-renal homeostasis through regulation of natriuresis and vasodilation. In vivo promotes natriuresis and in vitro, vasodilates renal artery strips. Functionally, may have a role in cardio-renal homeostasis through regulation of regulation of natriuresis and vasodilation. In vivo promotes natriuresis. In vitro, vasodilates intestinal smooth muscle but not smooth muscle strips. May have a role in cardio-renal homeostasis through regulation of natriuresis and vasodilation. In vivo promotes natriuresis. In vitro, selectively vasodilates intestinal and vascular smooth muscle strips. In terms of biological role, may have a role in cardio-renal homeostasis through regulation of natriuresis and vasodilation. In vivo promotes natriuresis. In vitro, selectively vasodilates intestinal smooth muscle but not vascular smooth muscle strips. The sequence is that of Natriuretic peptides A (NPPA) from Sus scrofa (Pig).